The sequence spans 86 residues: MISAVILFLLLLVEQAAALGEPQLCYILDAVLFLYGIVLTLLYCRLKIQVRKAAIASREKADAVYTGLNTRSQETYETLKHEKPPQ.

An N-terminal signal peptide occupies residues 1–18 (MISAVILFLLLLVEQAAA). Topologically, residues 19–23 (LGEPQ) are extracellular. The chain crosses the membrane as a helical span at residues 24 to 44 (LCYILDAVLFLYGIVLTLLYC). At 45–86 (RLKIQVRKAAIASREKADAVYTGLNTRSQETYETLKHEKPPQ) the chain is on the cytoplasmic side. An ITAM domain is found at 54 to 82 (AIASREKADAVYTGLNTRSQETYETLKHE). A phosphotyrosine mark is found at Tyr65 and Tyr76. Thr78 is subject to Phosphothreonine.

Belongs to the CD3Z/FCER1G family. IgE Fc receptor is a tetramer of an alpha chain, a beta chain, and two disulfide linked gamma chains. Associates with FCGR1A; forms a functional signaling complex. The signaling subunit of immunoglobulin gamma (IgG) Fc receptor complex. As a homodimer or a heterodimer of CD247 and FCER1G, associates with the ligand binding subunit FCGR3A to form a functional receptor complex. Associates with CLEC6A. Interacts with CLEC4E. Interacts (via ITAM domain) with SYK (via SH2 domains); activates SYK, enabling integrin-mediated activation of neutrophils and macrophages. Interacts with CSF2RB and recruits SYK in response to IL3 stimulation; this interaction is direct. Interacts with CD300LH; the interaction may be indirect. Interacts with CD300LD. Interacts with TARM1. Expressed in mast cells (at protein level). Expressed in basophils (at protein level).

The protein resides in the cell membrane. Its function is as follows. Adapter protein containing an immunoreceptor tyrosine-based activation motif (ITAM) that transduces activation signals from various immunoreceptors. As a component of the high-affinity immunoglobulin E (IgE) receptor, mediates allergic inflammatory signaling in mast cells. As a constitutive component of interleukin-3 receptor complex, selectively mediates interleukin 4/IL4 production by basophils, priming T-cells toward effector T-helper 2 subset. Associates with pattern recognition receptors CLEC4D and CLEC4E to form a functional signaling complex in myeloid cells. Binding of mycobacterial trehalose 6,6'-dimycolate (TDM) to this receptor complex leads to phosphorylation of ITAM, triggering activation of SYK, CARD9 and NF-kappa-B, consequently driving maturation of antigen-presenting cells and shaping antigen-specific priming of T-cells toward effector T-helper 1 and T-helper 17 cell subtypes. May function cooperatively with other activating receptors. Functionally linked to integrin beta-2/ITGB2-mediated neutrophil activation. Also involved in integrin alpha-2/ITGA2-mediated platelet activation. The polypeptide is High affinity immunoglobulin epsilon receptor subunit gamma (Mus musculus (Mouse)).